A 141-amino-acid chain; its full sequence is MGNKESKYLEMCSDEAWLNIPNVFKCIFIRKLFYNKWLKYQEKKLEKRLRLLSFYHAKKDFIGIRDMLQTAPGGSYFITDNITEEFLMLVLKHPEDGSAEFTKLCLKGSCIMIDGYYYDNLDIFLAESPDLYKYPLIRYDR.

Belongs to the asfivirus MGF 100 family.

Functionally, plays a role in virus cell tropism, and may be required for efficient virus replication in macrophages. The protein is Protein MGF 100-2L of African swine fever virus (isolate Tick/Malawi/Lil 20-1/1983) (ASFV).